The sequence spans 473 residues: Zinc finger and SCAN domain-containing protein 21 (473 aa).

Lys27 participates in a covalent cross-link: Glycyl lysine isopeptide (Lys-Gly) (interchain with G-Cter in SUMO2). An SCAN box domain is found at 45–127 (RQRFRQFGYH…TLLEDLEREL (83 aa)). A disordered region spans residues 127-167 (LDEPGHQVSTPPNEQKPVWEKISSSGTAKESPSSMQPQPLE). The segment covering 148-165 (ISSSGTAKESPSSMQPQP) has biased composition (polar residues). Residues Lys221 and Lys232 each participate in a glycyl lysine isopeptide (Lys-Gly) (interchain with G-Cter in SUMO2) cross-link. The disordered stretch occupies residues 244–272 (LENEKGTKPPLQEAGSKKGRESVPTKPTP). The span at 258–272 (GSKKGRESVPTKPTP) shows a compositional bias: basic and acidic residues. 7 consecutive C2H2-type zinc fingers follow at residues 277 to 299 (YICAECGKAFSNSSNLTKHRRTH), 305 to 327 (YVCTKCGKAFSHSSNLTLHYRTH), 333 to 354 (YDCKCGKAFGQSSDLLKHQRMH), 360 to 382 (YQCKDCGKAFSGKGSLIRHYRIH), 388 to 410 (YQCNECGKSFSQHAGLSSHQRLH), 416 to 438 (YKCKECGKAFNHSSNFNKHHRIH), and 444 to 466 (YWCHHCGKTFCSKSNLSKHQRVH). Lys349 participates in a covalent cross-link: Glycyl lysine isopeptide (Lys-Gly) (interchain with G-Cter in SUMO2).

The protein belongs to the krueppel C2H2-type zinc-finger protein family.

The protein localises to the nucleus. Strong transcriptional activator. Plays an important role in spermatogenesis; essential for the progression of meiotic prophase I in spermatocytes. The polypeptide is Zinc finger and SCAN domain-containing protein 21 (ZSCAN21) (Pan troglodytes (Chimpanzee)).